The primary structure comprises 214 residues: 3-isopropylmalate dehydratase small subunit (214 aa).

It belongs to the LeuD family. LeuD type 1 subfamily. As to quaternary structure, heterodimer of LeuC and LeuD.

It carries out the reaction (2R,3S)-3-isopropylmalate = (2S)-2-isopropylmalate. It participates in amino-acid biosynthesis; L-leucine biosynthesis; L-leucine from 3-methyl-2-oxobutanoate: step 2/4. In terms of biological role, catalyzes the isomerization between 2-isopropylmalate and 3-isopropylmalate, via the formation of 2-isopropylmaleate. The protein is 3-isopropylmalate dehydratase small subunit of Pseudomonas putida (strain GB-1).